Here is a 321-residue protein sequence, read N- to C-terminus: MYLYTLILLFLASVNVNAYADPGACSGNCWTHDPGLYQRKSDGKYFRFATGGGIHIASADSLEGPWTDDGYVLPNGSIIDLNGKNNLWAPDLHYRDGTYYLYYAVSSLGSQNSAIGVATSKTMEAGSWTDHGTTGIESTPASPYNAIDANWIAVGGTQYANFGSYWNNLFQVEMTNGLKVKSGATPHQIAYNASGIHRQEAAFMFERNDYFYLTFSGGIALGYNDTWPAPGEEYFISVCRSTSATGGFVDKNGVSCLNSGGTLLLASHGFVYGPGGQGILKDSSKGFVLYYHYADTRIGKAVEDYQFGWNQLKWENDWPSV.

An N-terminal signal peptide occupies residues 1–20; sequence MYLYTLILLFLASVNVNAYA. Aspartate 33 functions as the Proton acceptor in the catalytic mechanism. N-linked (GlcNAc...) asparagine glycosylation is found at asparagine 75 and asparagine 192. Glutamate 200 serves as the catalytic Proton donor. Asparagine 224 is a glycosylation site (N-linked (GlcNAc...) asparagine).

This sequence belongs to the glycosyl hydrolase 43 family.

The protein resides in the secreted. The catalysed reaction is Endohydrolysis of (1-&gt;5)-alpha-arabinofuranosidic linkages in (1-&gt;5)-arabinans.. It participates in glycan metabolism; L-arabinan degradation. In terms of biological role, endo-1,5-alpha-L-arabinanase involved in degradation of pectin. Its preferred substrate is linear 1,5-alpha-L-arabinan. This is Probable arabinan endo-1,5-alpha-L-arabinosidase C (abnC) from Neosartorya fischeri (strain ATCC 1020 / DSM 3700 / CBS 544.65 / FGSC A1164 / JCM 1740 / NRRL 181 / WB 181) (Aspergillus fischerianus).